The following is a 146-amino-acid chain: Large ribosomal subunit protein uL15 (146 aa).

The segment at 1-57 (MKLFELQPAPGSKKLPKRKGRGHGTGNGKTAGRGHKGQNARSGGGVRPGFEGGQMPL) is disordered. Positions 42–52 (SGGGVRPGFEG) are enriched in gly residues.

This sequence belongs to the universal ribosomal protein uL15 family. As to quaternary structure, part of the 50S ribosomal subunit.

Its function is as follows. Binds to the 23S rRNA. This is Large ribosomal subunit protein uL15 from Acetivibrio thermocellus (strain ATCC 27405 / DSM 1237 / JCM 9322 / NBRC 103400 / NCIMB 10682 / NRRL B-4536 / VPI 7372) (Clostridium thermocellum).